The following is a 365-amino-acid chain: Putative nudix hydrolase 1 (365 aa).

In terms of domain architecture, Nudix hydrolase spans valine 72–valine 201. Positions glycine 109–glycine 130 match the Nudix box motif. Mg(2+) is bound by residues glutamate 124 and glutamate 128.

Belongs to the Nudix hydrolase family. It depends on Mg(2+) as a cofactor. Mn(2+) is required as a cofactor.

In terms of biological role, probably mediates the hydrolysis of some nucleoside diphosphate derivatives. This chain is Putative nudix hydrolase 1 (ndx-1), found in Caenorhabditis elegans.